We begin with the raw amino-acid sequence, 95 residues long: Aspartyl/glutamyl-tRNA(Asn/Gln) amidotransferase subunit C (95 aa).

This sequence belongs to the GatC family. Heterotrimer of A, B and C subunits.

It carries out the reaction L-glutamyl-tRNA(Gln) + L-glutamine + ATP + H2O = L-glutaminyl-tRNA(Gln) + L-glutamate + ADP + phosphate + H(+). The catalysed reaction is L-aspartyl-tRNA(Asn) + L-glutamine + ATP + H2O = L-asparaginyl-tRNA(Asn) + L-glutamate + ADP + phosphate + 2 H(+). In terms of biological role, allows the formation of correctly charged Asn-tRNA(Asn) or Gln-tRNA(Gln) through the transamidation of misacylated Asp-tRNA(Asn) or Glu-tRNA(Gln) in organisms which lack either or both of asparaginyl-tRNA or glutaminyl-tRNA synthetases. The reaction takes place in the presence of glutamine and ATP through an activated phospho-Asp-tRNA(Asn) or phospho-Glu-tRNA(Gln). The sequence is that of Aspartyl/glutamyl-tRNA(Asn/Gln) amidotransferase subunit C from Nitrosospira multiformis (strain ATCC 25196 / NCIMB 11849 / C 71).